Consider the following 390-residue polypeptide: Dual-specificity RNA methyltransferase RlmN (390 aa).

The Proton acceptor role is filled by E110. Residues 116–355 form the Radical SAM core domain; the sequence is EADRATLCVS…VIIRKTRGDD (240 aa). C123 and C360 are joined by a disulfide. C130, C134, and C137 together coordinate [4Fe-4S] cluster. S-adenosyl-L-methionine contacts are provided by residues 184 to 185, S216, 238 to 240, and N317; these read GE and SLH. The active-site S-methylcysteine intermediate is C360.

Belongs to the radical SAM superfamily. RlmN family. The cofactor is [4Fe-4S] cluster.

The protein resides in the cytoplasm. The enzyme catalyses adenosine(2503) in 23S rRNA + 2 reduced [2Fe-2S]-[ferredoxin] + 2 S-adenosyl-L-methionine = 2-methyladenosine(2503) in 23S rRNA + 5'-deoxyadenosine + L-methionine + 2 oxidized [2Fe-2S]-[ferredoxin] + S-adenosyl-L-homocysteine. It carries out the reaction adenosine(37) in tRNA + 2 reduced [2Fe-2S]-[ferredoxin] + 2 S-adenosyl-L-methionine = 2-methyladenosine(37) in tRNA + 5'-deoxyadenosine + L-methionine + 2 oxidized [2Fe-2S]-[ferredoxin] + S-adenosyl-L-homocysteine. In terms of biological role, specifically methylates position 2 of adenine 2503 in 23S rRNA and position 2 of adenine 37 in tRNAs. m2A2503 modification seems to play a crucial role in the proofreading step occurring at the peptidyl transferase center and thus would serve to optimize ribosomal fidelity. The sequence is that of Dual-specificity RNA methyltransferase RlmN from Haemophilus influenzae (strain ATCC 51907 / DSM 11121 / KW20 / Rd).